A 475-amino-acid chain; its full sequence is Aspartyl/glutamyl-tRNA(Asn/Gln) amidotransferase subunit B (475 aa).

Belongs to the GatB/GatE family. GatB subfamily. As to quaternary structure, heterotrimer of A, B and C subunits.

The catalysed reaction is L-glutamyl-tRNA(Gln) + L-glutamine + ATP + H2O = L-glutaminyl-tRNA(Gln) + L-glutamate + ADP + phosphate + H(+). It catalyses the reaction L-aspartyl-tRNA(Asn) + L-glutamine + ATP + H2O = L-asparaginyl-tRNA(Asn) + L-glutamate + ADP + phosphate + 2 H(+). Allows the formation of correctly charged Asn-tRNA(Asn) or Gln-tRNA(Gln) through the transamidation of misacylated Asp-tRNA(Asn) or Glu-tRNA(Gln) in organisms which lack either or both of asparaginyl-tRNA or glutaminyl-tRNA synthetases. The reaction takes place in the presence of glutamine and ATP through an activated phospho-Asp-tRNA(Asn) or phospho-Glu-tRNA(Gln). The protein is Aspartyl/glutamyl-tRNA(Asn/Gln) amidotransferase subunit B of Clostridium novyi (strain NT).